Here is a 346-residue protein sequence, read N- to C-terminus: uncharacterized protein (346 aa).

This is an uncharacterized protein from Schizosaccharomyces pombe (strain 972 / ATCC 24843) (Fission yeast).